The primary structure comprises 341 residues: Probable sulfurtransferase (341 aa).

The Zn(2+) site is built by cysteine 40, cysteine 42, cysteine 58, and cysteine 61. Glycine 88 contacts ATP. Residues cysteine 176 and cysteine 179 each coordinate [4Fe-4S] cluster. The ATP site is built by arginine 183 and glycine 202. Position 267 (cysteine 267) interacts with [4Fe-4S] cluster. The Zn(2+) site is built by cysteine 316, cysteine 319, cysteine 328, and cysteine 331.

It belongs to the TtcA family. It depends on [4Fe-4S] cluster as a cofactor. Mg(2+) is required as a cofactor.

In Methanocaldococcus jannaschii (strain ATCC 43067 / DSM 2661 / JAL-1 / JCM 10045 / NBRC 100440) (Methanococcus jannaschii), this protein is Probable sulfurtransferase.